Here is a 199-residue protein sequence, read N- to C-terminus: CASP-like protein 1D2 (199 aa).

The interval 1-27 (MASTENPDPETGKSEPIPASATPPPSS) is disordered. At Ala2 the chain carries N-acetylalanine. The Cytoplasmic portion of the chain corresponds to 2–36 (ASTENPDPETGKSEPIPASATPPPSSAASFLDCRK). Residues 37–57 (IDIITRVLLFSATLTALIVMV) traverse the membrane as a helical segment. At 58 to 85 (TSDQTEMTQLPGVSSPAPVSAEFNDSPA) the chain is on the extracellular side. Residues 86–106 (FIYFVVALVVASFYALISTLV) traverse the membrane as a helical segment. At 107–129 (SISLLLKPEFTAQFSIYLASLDM) the chain is on the cytoplasmic side. A helical membrane pass occupies residues 130 to 150 (VMLGILASATGTAGGVAYIAL). At 151–171 (KGNEEVGWNKICNVYDKFCRY) the chain is on the extracellular side. Residues 172-192 (IATSLALSLFASLLLLVLSIW) form a helical membrane-spanning segment. Over 193 to 199 (SALSKRT) the chain is Cytoplasmic.

Belongs to the Casparian strip membrane proteins (CASP) family. In terms of assembly, homodimer and heterodimers. Expressed in the root endodermis and flowers.

It localises to the cell membrane. This chain is CASP-like protein 1D2, found in Arabidopsis thaliana (Mouse-ear cress).